Here is a 64-residue protein sequence, read N- to C-terminus: MFTMKKSLLLLFFLGTIHLSLCEQERNAEEERRDDLGERQAEVEKRFLPIAGKLLSGLSGLLGK.

Positions 1-22 are cleaved as a signal peptide; sequence MFTMKKSLLLLFFLGTIHLSLC. Residues 23 to 46 constitute a propeptide that is removed on maturation; sequence EQERNAEEERRDDLGERQAEVEKR. Residue L62 is modified to Leucine amide.

Expressed by the skin glands.

Its subcellular location is the secreted. In terms of biological role, antimicrobial peptide with activity against Gram-positive and Gram-negative bacteria and against fungi. Has been tested against S.aureus (MIC=1.25 ug/mL), B.pumilus (MIC=2.5 ug/mL), B.cereus (MIC=15.0 ug/mL), E.coli (MIC=1.25 ug/mL), B.dysenteriae (MIC=5.0 ug/mL), A.cacoaceticus (MIC=15.0 ug/mL), P.aeruginosa (MIC=5.0 ug/mL) and C.albicans (MIC=1.25 ug/mL). Also shows a weak hemolytic activity. This chain is Temporin-ALd, found in Amolops loloensis (Lolokou Sucker Frog).